The primary structure comprises 206 residues: Ras-related protein Rab-14 (206 aa).

Residue 15 to 22 (GDMGVGKS) coordinates GTP. The Effector region motif lies at 37 to 45 (SPHTIGVEF). Residues 63–67 (DTAGQ) and 121–124 (NKKD) contribute to the GTP site. A disordered region spans residues 182–206 (PDGGITKNPPQTITDKPQDASKCSC). The segment covering 189-206 (NPPQTITDKPQDASKCSC) has biased composition (polar residues). 2 S-geranylgeranyl cysteine lipidation sites follow: C204 and C206. Residue C206 is modified to Cysteine methyl ester.

The protein belongs to the small GTPase superfamily. Rab family.

Its subcellular location is the endosome. It localises to the contractile vacuole. The protein resides in the membrane. The enzyme catalyses GTP + H2O = GDP + phosphate + H(+). Rab activation is generally mediated by a guanine exchange factor (GEF), while inactivation through hydrolysis of bound GTP is catalyzed by a GTPase activating protein (GAP). That Rab is activated by the DENND6A and DENND6B guanine exchange factors (GEF). The small GTPases Rab are key regulators of intracellular membrane trafficking, from the formation of transport vesicles to their fusion with membranes. Rabs cycle between an inactive GDP-bound form and an active GTP-bound form that is able to recruit to membranes different set of downstream effectors directly responsible for vesicle formation, movement, tethering and fusion. Regulates the fusion of phagosomes and lysosomes. The sequence is that of Ras-related protein Rab-14 (rab14) from Dictyostelium discoideum (Social amoeba).